Consider the following 240-residue polypeptide: Ubiquinone biosynthesis O-methyltransferase (240 aa).

S-adenosyl-L-methionine is bound by residues R44, G64, D85, and M129.

This sequence belongs to the methyltransferase superfamily. UbiG/COQ3 family.

It carries out the reaction a 3-demethylubiquinol + S-adenosyl-L-methionine = a ubiquinol + S-adenosyl-L-homocysteine + H(+). The enzyme catalyses a 3-(all-trans-polyprenyl)benzene-1,2-diol + S-adenosyl-L-methionine = a 2-methoxy-6-(all-trans-polyprenyl)phenol + S-adenosyl-L-homocysteine + H(+). Its pathway is cofactor biosynthesis; ubiquinone biosynthesis. Functionally, O-methyltransferase that catalyzes the 2 O-methylation steps in the ubiquinone biosynthetic pathway. The chain is Ubiquinone biosynthesis O-methyltransferase from Escherichia coli O6:H1 (strain CFT073 / ATCC 700928 / UPEC).